Here is a 465-residue protein sequence, read N- to C-terminus: MLWTDCLTRLRQELSDNVFAMWIRPLVAEEVEGILRLYAPNPYWTRYIQENHLELISILAEQLSEGRVRQVEILVDSRPGSILSSSEQPATTTAALQTAPIPQPAKGKREPEPVANTAVSSKSSKKKLLNPQFTFSLFVEGRSNQMAAETCRKVLTQLGASQHNPLFLYGPTGLGKTHLMQAVGNALLQAKPNARVMYMTSESFVQDFVSSLQKGKVEEFKKNCRSLDLLLVDDIHLLAGKEASLVEFFYTFNALLDESKQIILTSDRYPKELTELDPRLVSRFSWGLSVGVEPPDIETRIEILLKKAENSGVDLPRNCALFIAQQVVANVRELEGALNKVVAISRFKGAPIDLDVVRESLKDVLAIRARTISVENIQRVVSEYFRIPLKELVGPKRTRIYARPRQLAMGLARELTGDSFPEIGMAFGGRDHSTVMHACEKVVSLREEDPIFDEDYKNLLRLLQS.

The interval 1–87 (MLWTDCLTRL…RPGSILSSSE (87 aa)) is domain I, interacts with DnaA modulators. Residues 81–123 (SILSSSEQPATTTAALQTAPIPQPAKGKREPEPVANTAVSSKS) are disordered. Positions 88 to 100 (QPATTTAALQTAP) are enriched in low complexity. Residues 88 to 127 (QPATTTAALQTAPIPQPAKGKREPEPVANTAVSSKSSKKK) form a domain II region. Positions 128 to 345 (LLNPQFTFSL…GALNKVVAIS (218 aa)) are domain III, AAA+ region. Residues G173, G175, K176, and T177 each contribute to the ATP site. The tract at residues 346 to 465 (RFKGAPIDLD…YKNLLRLLQS (120 aa)) is domain IV, binds dsDNA.

This sequence belongs to the DnaA family. As to quaternary structure, oligomerizes as a right-handed, spiral filament on DNA at oriC.

The protein localises to the cytoplasm. Plays an essential role in the initiation and regulation of chromosomal replication. ATP-DnaA binds to the origin of replication (oriC) to initiate formation of the DNA replication initiation complex once per cell cycle. Binds the DnaA box (a 9 base pair repeat at the origin) and separates the double-stranded (ds)DNA. Forms a right-handed helical filament on oriC DNA; dsDNA binds to the exterior of the filament while single-stranded (ss)DNA is stabiized in the filament's interior. The ATP-DnaA-oriC complex binds and stabilizes one strand of the AT-rich DNA unwinding element (DUE), permitting loading of DNA polymerase. After initiation quickly degrades to an ADP-DnaA complex that is not apt for DNA replication. Binds acidic phospholipids. The protein is Chromosomal replication initiator protein DnaA of Acinetobacter baumannii (strain SDF).